A 172-amino-acid polypeptide reads, in one-letter code: Scytalone dehydratase-like protein Arp1 (172 aa).

Y49 contacts substrate. Residues H84 and H109 contribute to the active site. A substrate-binding site is contributed by N130.

This sequence belongs to the scytalone dehydratase family. In terms of assembly, homotrimer. Each subunit contains an active site, located in the central part of the hydrophobic core of the monomer, which functions independently.

Its function is as follows. Scytalone dehydratase-like protein; part of the Pks2 gene cluster that mediates the formation of infectious structures (appressoria), enabling these fungi to kill insects faster. The product of the Pks2 gene cluster is different from the one of Pks1 and has still not been identified. The protein is Scytalone dehydratase-like protein Arp1 of Metarhizium robertsii (strain ARSEF 23 / ATCC MYA-3075) (Metarhizium anisopliae (strain ARSEF 23)).